Here is a 394-residue protein sequence, read N- to C-terminus: DNA repair protein brc-2 (394 aa).

Basic and acidic residues predominate over residues Met-1–Phe-12. 2 disordered regions span residues Met-1–Ser-30 and Met-56–Lys-136. An interaction with rad-51 region spans residues Met-1–Asp-60. Positions Pro-28–Lys-62 are BRCA2 repeat-like region. Residues Met-56–Ser-73 show a composition bias toward low complexity. The interval Asp-60 to Phe-89 is interaction with rad-51-DNA complexes. A compositionally biased stretch (basic residues) spans Lys-124–Lys-134. The interval Trp-371 to Ser-389 is required for ssDNA binding.

As to quaternary structure, interacts (via N-terminus) with rad-51; regulates rad-51 recruitment to sites of DNA double strand breaks. As to expression, expressed in the germline, with highest expression in cells undergoing oogenesis.

It localises to the nucleus. The protein localises to the chromosome. In terms of biological role, required for the homologous recombination repair of DNA double strand breaks, thereby playing a role in chromosome integrity. Acts by targeting rad-51 to sites of DNA damage and stabilizing rad-51-DNA filaments by blocking ATP hydrolysis catalyzed by rad-51. Promotes rad-51 mediated displacement-loop (D-loop) formation during strand invasion between the invading single-stranded DNA (ssDNA) and the homologous duplex DNA. Also functions independently of rad-51 in DNA double-strand break (DSB) repair by promoting DNA single-strand annealing (SSA) when the homologous recombination (HR) and non-homologous end joining (NHEJ) pathways are compromised. Binds selectively to single-stranded (ssDNA) via its C-terminus. Involved in telomere maintenance and replicative senescence. The sequence is that of DNA repair protein brc-2 from Caenorhabditis elegans.